Here is a 602-residue protein sequence, read N- to C-terminus: 4-hydroxy-3-methylbut-2-en-1-yl diphosphate synthase (flavodoxin) (602 aa).

Residues C508, C511, C543, and E550 each coordinate [4Fe-4S] cluster.

It belongs to the IspG family. [4Fe-4S] cluster is required as a cofactor.

It carries out the reaction (2E)-4-hydroxy-3-methylbut-2-enyl diphosphate + oxidized [flavodoxin] + H2O + 2 H(+) = 2-C-methyl-D-erythritol 2,4-cyclic diphosphate + reduced [flavodoxin]. It participates in isoprenoid biosynthesis; isopentenyl diphosphate biosynthesis via DXP pathway; isopentenyl diphosphate from 1-deoxy-D-xylulose 5-phosphate: step 5/6. Converts 2C-methyl-D-erythritol 2,4-cyclodiphosphate (ME-2,4cPP) into 1-hydroxy-2-methyl-2-(E)-butenyl 4-diphosphate. This chain is 4-hydroxy-3-methylbut-2-en-1-yl diphosphate synthase (flavodoxin), found in Chlamydia trachomatis serovar L2 (strain ATCC VR-902B / DSM 19102 / 434/Bu).